Here is a 230-residue protein sequence, read N- to C-terminus: U2 small nuclear ribonucleoprotein A' (230 aa).

LRR repeat units lie at residues 19–40 (KDRE…PFFP), 41–62 (RLRM…LANS), and 65–86 (GLTT…DPLR). The LRRCT domain occupies 99–137 (NPVTRKEYYRLWIIWRIPSVRFLDYQKVKDAERAKAAEL). The tract at residues 211–230 (GRIPGGALDGAGNDGDQMQL) is disordered. The span at 213–223 (IPGGALDGAGN) shows a compositional bias: gly residues.

This sequence belongs to the U2 small nuclear ribonucleoprotein A family. In terms of assembly, associated with the spliceosome.

The protein localises to the nucleus. Functionally, involved in pre-mRNA splicing. The sequence is that of U2 small nuclear ribonucleoprotein A' (lea1) from Emericella nidulans (strain FGSC A4 / ATCC 38163 / CBS 112.46 / NRRL 194 / M139) (Aspergillus nidulans).